A 285-amino-acid polypeptide reads, in one-letter code: UstYa family oxidase phomYe (285 aa).

Residues 32–54 (LFYGWKGIAFLSTLTNVLFISGF) traverse the membrane as a helical segment. The interval 143–165 (YGFGTPLTGPGSEGNEHDPTPWT) is disordered. Positions 177 to 181 (HQLHC) match the HXXHC 1 motif. An N-linked (GlcNAc...) asparagine glycan is attached at N202. The HXXHC 2 signature appears at 209–213 (HVDHC).

It belongs to the ustYa family.

It is found in the membrane. Its pathway is mycotoxin biosynthesis. Its function is as follows. UstYa family oxidase; part of the gene cluster that mediates the biosynthesis of the phomopsins, a group of hexapeptide mycotoxins which infects lupins and causes lupinosis disease in livestock. Within the pathway, phomYe catalyzes the desaturation of the Pro moiety into 3,4-dehydroproline (dPro). The pathway starts with the processing of the precursor phomA by several endopeptidases including kexin proteases as well as the cluster-specific S41 family peptidase phomP1 and the oligopeptidase phomG to produce 10 identical copies of the hexapeptide Tyr-Val-Ile-Pro-Ile-Asp. After being excised from the precursor peptide, the core peptides are cyclized and modified post-translationally by enzymes encoded within the gene cluster. The timing and order of proteolysis of the phomA precursor and PTMs are still unknown. Two tyrosinase-like enzymes, phomQ1 and phomQ2, catalyze the chlorination and hydroxylation of Tyr, respectively. PhomYb, is proposed to be involved in the construction of the macrocyclic structure. The other 4 ustYa family proteins may be involved in PTMs that generate the unique structure of phomopsin A. PhomYa is required for the hydroxylation of C-beta of Tyr. PhomYc, phomYd, and phomYe are responsible for the biosynthesis of 2,3-dehydroisoleucine (dIle), 2,3-dehydroaspartic acid (dAsp), and 3,4-dehydroproline (dPro), respectively. While dIle formation by phomYc is indispensable for the installation of dAsp by phomYd, the order of the other PTMs have not been elucidated yet. Most of the biosynthetic enzymes likely have broad substrate specificity, and thus, there might be a metabolic grid from a precursor to phomopsin A. The enzyme(s) responsible for the biosynthesis of 3,4-dehydrovaline (dVal) have also not been identified yet. Finally, phomM acts as an S-adenosylmethionine-dependent alpha-N-methyltransferase that catalyzes two successive N-methylation reactions, converting N-desmethyl-phomopsin A to phomopsin A and phomopsin A further to an N,N-dimethylated congener called phomopsin E. This Diaporthe leptostromiformis (Lupinosis disease fungus) protein is UstYa family oxidase phomYe.